The primary structure comprises 116 residues: NADPH-dependent 7-cyano-7-deazaguanine reductase (116 aa).

Residue Cys-31 is the Thioimide intermediate of the active site. Catalysis depends on Asp-38, which acts as the Proton donor. Residues 53–55 (VEL) and 72–73 (YE) each bind substrate.

It belongs to the GTP cyclohydrolase I family. QueF type 1 subfamily.

Its subcellular location is the cytoplasm. The catalysed reaction is 7-aminomethyl-7-carbaguanine + 2 NADP(+) = 7-cyano-7-deazaguanine + 2 NADPH + 3 H(+). Its pathway is tRNA modification; tRNA-queuosine biosynthesis. Catalyzes the NADPH-dependent reduction of 7-cyano-7-deazaguanine (preQ0) to 7-aminomethyl-7-deazaguanine (preQ1). The protein is NADPH-dependent 7-cyano-7-deazaguanine reductase of Chlorobium phaeobacteroides (strain DSM 266 / SMG 266 / 2430).